The sequence spans 137 residues: Protein MGF 110-7L (137 aa).

A signal peptide spans 1-20 (MLVIILGVIGLLASSNLVSS). 3 N-linked (GlcNAc...) asparagine; by host glycosylation sites follow: asparagine 69, asparagine 70, and asparagine 105.

This sequence belongs to the asfaviruses V110 family.

The sequence is that of Protein MGF 110-7L from Ornithodoros (relapsing fever ticks).